The chain runs to 369 residues: Histidinol-phosphate aminotransferase 2 (369 aa).

N6-(pyridoxal phosphate)lysine is present on Lys-231.

The protein belongs to the class-II pyridoxal-phosphate-dependent aminotransferase family. Histidinol-phosphate aminotransferase subfamily. Homodimer. It depends on pyridoxal 5'-phosphate as a cofactor.

It carries out the reaction L-histidinol phosphate + 2-oxoglutarate = 3-(imidazol-4-yl)-2-oxopropyl phosphate + L-glutamate. Its pathway is amino-acid biosynthesis; L-histidine biosynthesis; L-histidine from 5-phospho-alpha-D-ribose 1-diphosphate: step 7/9. The chain is Histidinol-phosphate aminotransferase 2 from Legionella pneumophila (strain Paris).